The sequence spans 923 residues: Protocadherin gamma-B5 (923 aa).

The signal sequence occupies residues 1 to 30 (MGSGAGELGRAERLPVLFLFLLSLFCPALC). Cadherin domains are found at residues 31–133 (EQIR…TPKF), 134–242 (TQNS…PPVF), 243–343 (NRDV…SPEV), 344–448 (TFHS…APVF), 449–558 (HQAS…APRV), and 566–671 (DGSA…LPDI). At 31–687 (EQIRYRIPEE…SDPQAELQFY (657 aa)) the chain is on the extracellular side. N-linked (GlcNAc...) asparagine glycans are attached at residues Asn-415 and Asn-541. A helical membrane pass occupies residues 688–708 (LVVALALISVLFLLAVILAVA). At 709–923 (LRLRRSSSPA…KKKSGKKEKK (215 aa)) the chain is on the cytoplasmic side. 2 disordered regions span residues 794 to 832 (TSHP…WPNN) and 893 to 923 (ATLT…KEKK). A compositionally biased stretch (polar residues) spans 807-832 (WRFSQAQRPGTSGSQNGDDTGTWPNN). The span at 913-923 (NKKKSGKKEKK) shows a compositional bias: basic residues.

The protein resides in the cell membrane. Its function is as follows. Potential calcium-dependent cell-adhesion protein. May be involved in the establishment and maintenance of specific neuronal connections in the brain. The chain is Protocadherin gamma-B5 (PCDHGB5) from Homo sapiens (Human).